The chain runs to 496 residues: Glycerol kinase (496 aa).

T12 serves as a coordination point for ADP. Residues T12, T13, and S14 each contribute to the ATP site. Position 12 (T12) interacts with sn-glycerol 3-phosphate. ADP is bound at residue R16. Sn-glycerol 3-phosphate-binding residues include R82, E83, and Y134. Positions 82, 83, and 134 each coordinate glycerol. H230 bears the Phosphohistidine; by HPr mark. Residue D244 participates in sn-glycerol 3-phosphate binding. Glycerol is bound by residues D244 and Q245. T266 and G309 together coordinate ADP. Residues T266, G309, Q313, and G410 each coordinate ATP. ADP contacts are provided by G410 and N414.

This sequence belongs to the FGGY kinase family. Homotetramer and homodimer (in equilibrium). The phosphoenolpyruvate-dependent sugar phosphotransferase system (PTS), including enzyme I, and histidine-containing protein (HPr) are required for the phosphorylation, which leads to the activation of the enzyme.

It carries out the reaction glycerol + ATP = sn-glycerol 3-phosphate + ADP + H(+). It participates in polyol metabolism; glycerol degradation via glycerol kinase pathway; sn-glycerol 3-phosphate from glycerol: step 1/1. Activated by phosphorylation and inhibited by fructose 1,6-bisphosphate (FBP). In terms of biological role, key enzyme in the regulation of glycerol uptake and metabolism. Catalyzes the phosphorylation of glycerol to yield sn-glycerol 3-phosphate. In Bacillus cereus (strain Q1), this protein is Glycerol kinase.